Here is a 143-residue protein sequence, read N- to C-terminus: Crossover junction endodeoxyribonuclease Hjc (143 aa).

Position 12 (Glu12) interacts with Mg(2+). The active site involves Ser32. Residues Asp42 and Glu55 each coordinate Mg(2+).

Belongs to the Holliday junction resolvase Hjc family. Homodimer. The cofactor is Mg(2+).

The enzyme catalyses Endonucleolytic cleavage at a junction such as a reciprocal single-stranded crossover between two homologous DNA duplexes (Holliday junction).. Functionally, a structure-specific endonuclease that resolves Holliday junction (HJ) intermediates during genetic recombination. Cleaves 4-way DNA junctions introducing paired nicks in opposing strands, leaving a 5'-terminal phosphate and a 3'-terminal hydroxyl group that are subsequently ligated to produce recombinant products. Hjc, Hjm (Hel308) and PINA coordinate HJ migration and cleavage of replication forks in a coordinated way. This is Crossover junction endodeoxyribonuclease Hjc from Saccharolobus islandicus (strain REY15A) (Sulfolobus islandicus).